Here is a 213-residue protein sequence, read N- to C-terminus: Imidazole glycerol phosphate synthase subunit HisH (213 aa).

A Glutamine amidotransferase type-1 domain is found at 6 to 213 (LVTVIDYGMG…FKNFLNWNGQ (208 aa)). The active-site Nucleophile is Cys-86. Residues His-192 and Glu-194 contribute to the active site.

In terms of assembly, heterodimer of HisH and HisF.

The protein resides in the cytoplasm. The catalysed reaction is 5-[(5-phospho-1-deoxy-D-ribulos-1-ylimino)methylamino]-1-(5-phospho-beta-D-ribosyl)imidazole-4-carboxamide + L-glutamine = D-erythro-1-(imidazol-4-yl)glycerol 3-phosphate + 5-amino-1-(5-phospho-beta-D-ribosyl)imidazole-4-carboxamide + L-glutamate + H(+). The enzyme catalyses L-glutamine + H2O = L-glutamate + NH4(+). Its pathway is amino-acid biosynthesis; L-histidine biosynthesis; L-histidine from 5-phospho-alpha-D-ribose 1-diphosphate: step 5/9. Functionally, IGPS catalyzes the conversion of PRFAR and glutamine to IGP, AICAR and glutamate. The HisH subunit catalyzes the hydrolysis of glutamine to glutamate and ammonia as part of the synthesis of IGP and AICAR. The resulting ammonia molecule is channeled to the active site of HisF. The polypeptide is Imidazole glycerol phosphate synthase subunit HisH (Hydrogenovibrio crunogenus (strain DSM 25203 / XCL-2) (Thiomicrospira crunogena)).